We begin with the raw amino-acid sequence, 236 residues long: Purine nucleoside phosphorylase DeoD-type (236 aa).

H4 is an a purine D-ribonucleoside binding site. Phosphate is bound by residues G20, R24, R43, and 87 to 90; that span reads RVGT. Residues 178–180 and 202–203 contribute to the a purine D-ribonucleoside site; these read EME and SD. The active-site Proton donor is the D203.

The protein belongs to the PNP/UDP phosphorylase family. In terms of assembly, homohexamer; trimer of homodimers.

The enzyme catalyses a purine D-ribonucleoside + phosphate = a purine nucleobase + alpha-D-ribose 1-phosphate. The catalysed reaction is a purine 2'-deoxy-D-ribonucleoside + phosphate = a purine nucleobase + 2-deoxy-alpha-D-ribose 1-phosphate. In terms of biological role, catalyzes the reversible phosphorolytic breakdown of the N-glycosidic bond in the beta-(deoxy)ribonucleoside molecules, with the formation of the corresponding free purine bases and pentose-1-phosphate. This Geobacillus kaustophilus (strain HTA426) protein is Purine nucleoside phosphorylase DeoD-type.